The following is a 518-amino-acid chain: E3 ubiquitin-protein ligase TRIM39 (518 aa).

Residues 29–70 (CSVCLEYLKEPVIIECGHNFCKACITRWWEDLERDFPCPVCR) form an RING-type zinc finger. A B box-type zinc finger spans residues 102–143 (RDESLCPQHHEALSLFCYEDQEAVCLICAISHTHRAHTVVPL). Residues C107, H110, C129, and H135 each coordinate Zn(2+). A coiled-coil region spans residues 181–250 (ELKRLVESRR…AHLAAEVEGK (70 aa)). Interaction with CDKN1A stretches follow at residues 268–337 (KNIP…QLIA) and 389–518 (TSGR…TDWE). The region spanning 319 to 514 (SNFPRQYFAL…NAAPLTIRPP (196 aa)) is the B30.2/SPRY domain.

The protein belongs to the TRIM/RBCC family. In terms of assembly, isoform 1 interacts with MOAP1. Isoform 1 and isoform 2 interact with CDKN1A. Isoform 2 interacts (via domain B box-type) with CACTIN. Autoubiquitinated. Ubiquitous; highly expressed in brain, heart, kidney, liver, skeletal muscle, spleen and testis.

Its subcellular location is the cytoplasm. It localises to the cytosol. The protein resides in the mitochondrion. It is found in the nucleus. The enzyme catalyses S-ubiquitinyl-[E2 ubiquitin-conjugating enzyme]-L-cysteine + [acceptor protein]-L-lysine = [E2 ubiquitin-conjugating enzyme]-L-cysteine + N(6)-ubiquitinyl-[acceptor protein]-L-lysine.. The protein operates within protein modification; protein ubiquitination. E3 ubiquitin-protein ligase. May facilitate apoptosis by inhibiting APC/C-Cdh1-mediated poly-ubiquitination and subsequent proteasome-mediated degradation of the pro-apoptotic protein MOAP1. Regulates the G1/S transition of the cell cycle and DNA damage-induced G2 arrest by stabilizing CDKN1A/p21. Positively regulates CDKN1A/p21 stability by competing with DTL for CDKN1A/p21 binding, therefore disrupting DCX(DTL) E3 ubiquitin ligase complex-mediated CDKN1A/p21 ubiquitination and degradation. Functionally, regulates the G1/S transition of the cell cycle and DNA damage-induced G2 arrest by stabilizing CDKN1A/p21. Positively regulates CDKN1A/p21 stability by competing with DTL for CDKN1A/p21 binding, therefore disrupting DCX(DTL) E3 ubiquitin ligase complex-mediated CDKN1A/p21 ubiquitination and degradation. Negatively regulates the canonical NF-kappa-B signaling pathway via stabilization of CACTIN in an ubiquitination-independent manner. The polypeptide is E3 ubiquitin-protein ligase TRIM39 (TRIM39) (Homo sapiens (Human)).